The following is a 286-amino-acid chain: Bifunctional protein FolD (286 aa).

NADP(+)-binding positions include 165 to 167 (GRS) and serine 190.

This sequence belongs to the tetrahydrofolate dehydrogenase/cyclohydrolase family. As to quaternary structure, homodimer.

The catalysed reaction is (6R)-5,10-methylene-5,6,7,8-tetrahydrofolate + NADP(+) = (6R)-5,10-methenyltetrahydrofolate + NADPH. The enzyme catalyses (6R)-5,10-methenyltetrahydrofolate + H2O = (6R)-10-formyltetrahydrofolate + H(+). The protein operates within one-carbon metabolism; tetrahydrofolate interconversion. In terms of biological role, catalyzes the oxidation of 5,10-methylenetetrahydrofolate to 5,10-methenyltetrahydrofolate and then the hydrolysis of 5,10-methenyltetrahydrofolate to 10-formyltetrahydrofolate. In Paraburkholderia phytofirmans (strain DSM 17436 / LMG 22146 / PsJN) (Burkholderia phytofirmans), this protein is Bifunctional protein FolD.